We begin with the raw amino-acid sequence, 979 residues long: Translation initiation factor IF-2 (979 aa).

Residues 33–391 (VKSHSSTITT…TPPAEITLTE (359 aa)) are disordered. Low complexity-rich tracts occupy residues 54–63 (QKRPQAPKAQ) and 139–150 (AKTTSPKAEPAA). The segment covering 151 to 166 (PAAPKPKLMGPPPRPT) has biased composition (pro residues). Over residues 234–252 (PELDEEPDTNNVEGDDDAT) the composition is skewed to acidic residues. 2 stretches are compositionally biased toward basic residues: residues 263–278 (PAAK…PSKR) and 294–303 (TKTSKLKRRP). Polar residues predominate over residues 314–328 (GTTTNNNAEVPSVSL). The span at 371–380 (KEQRRDRPDV) shows a compositional bias: basic and acidic residues. The tr-type G domain occupies 468 to 641 (HRPPVVTIMG…LLVSEIEELS (174 aa)). Residues 477 to 484 (GHVDHGKT) are G1. 477 to 484 (GHVDHGKT) serves as a coordination point for GTP. The G2 stretch occupies residues 502–506 (GITQH). The segment at 527-530 (DTPG) is G3. GTP-binding positions include 527-531 (DTPGH) and 581-584 (NKMD). Positions 581 to 584 (NKMD) are G4. Residues 617-619 (SAL) are G5.

This sequence belongs to the TRAFAC class translation factor GTPase superfamily. Classic translation factor GTPase family. IF-2 subfamily.

It is found in the cytoplasm. Functionally, one of the essential components for the initiation of protein synthesis. Protects formylmethionyl-tRNA from spontaneous hydrolysis and promotes its binding to the 30S ribosomal subunits. Also involved in the hydrolysis of GTP during the formation of the 70S ribosomal complex. This is Translation initiation factor IF-2 from Picosynechococcus sp. (strain ATCC 27264 / PCC 7002 / PR-6) (Agmenellum quadruplicatum).